The sequence spans 1890 residues: DNA polymerase zeta catalytic subunit (1890 aa).

Polar residues-rich tracts occupy residues 508–533 and 549–560; these read QENL…NLRT and PDSSTSNGASEN. 2 disordered regions span residues 508-565 and 922-942; these read QENL…FRRY and GDSN…DRGA. Residues 922–940 show a composition bias toward basic and acidic residues; it reads GDSNIDSEKQPLRDNHNDR. Cysteine 1789, cysteine 1792, cysteine 1803, and cysteine 1806 together coordinate Zn(2+). The CysA-type zinc finger occupies 1789-1806; the sequence is CILCGEVVQESAQLCNRC. [4Fe-4S] cluster contacts are provided by cysteine 1835, cysteine 1838, cysteine 1851, and cysteine 1856. Positions 1835–1856 match the CysB motif motif; it reads CRHCGGGDWVVQSGVKCNSLAC.

This sequence belongs to the DNA polymerase type-B family. Forms DNA polymerase zeta with REV7. Requires [4Fe-4S] cluster as cofactor. In terms of tissue distribution, expressed in roots, leaves and flowers.

Its subcellular location is the nucleus. It catalyses the reaction DNA(n) + a 2'-deoxyribonucleoside 5'-triphosphate = DNA(n+1) + diphosphate. Its function is as follows. Catalytic subunit of the error prone DNA polymerase zeta. Involved in damage-tolerance mechanisms through translesion DNA synthesis. The polypeptide is DNA polymerase zeta catalytic subunit (REV3) (Arabidopsis thaliana (Mouse-ear cress)).